The sequence spans 386 residues: 2,3,4,5-tetrahydropyridine-2,6-dicarboxylate N-succinyltransferase (386 aa).

The active-site Acyl-anhydride intermediate is E257. Succinyl-CoA-binding positions include R259, G274, S277, A300, D315–A316, G323, K349, and R362–S365.

This sequence belongs to the type 2 tetrahydrodipicolinate N-succinyltransferase family. As to quaternary structure, homotrimer.

The protein localises to the cytoplasm. It carries out the reaction (S)-2,3,4,5-tetrahydrodipicolinate + succinyl-CoA + H2O = (S)-2-succinylamino-6-oxoheptanedioate + CoA. The protein operates within amino-acid biosynthesis; L-lysine biosynthesis via DAP pathway; LL-2,6-diaminopimelate from (S)-tetrahydrodipicolinate (succinylase route): step 1/3. Catalyzes the conversion of the cyclic tetrahydrodipicolinate (THDP) into the acyclic N-succinyl-L-2-amino-6-oxopimelate using succinyl-CoA. This is 2,3,4,5-tetrahydropyridine-2,6-dicarboxylate N-succinyltransferase from Campylobacter jejuni subsp. jejuni serotype O:2 (strain ATCC 700819 / NCTC 11168).